Reading from the N-terminus, the 451-residue chain is BSD domain-containing protein 1 (451 aa).

One can recognise a BSD domain in the interval 146–198 (WLSRFSLEEKKGEIAELLATSPSIRALYTKMVPAAVSHSEFWQRYFYKVHRLE). 2 disordered regions span residues 252–296 (SAAL…SLVT) and 309–424 (LQTG…DLDM). A compositionally biased stretch (low complexity) spans 275 to 295 (PPELAPAEGSPSESSESVSLV). The segment covering 309–320 (LQTGVQPSGNRD) has biased composition (polar residues). The segment covering 365 to 388 (KEVESKAQGRTETLKEEGPTDLRV) has biased composition (basic and acidic residues). Over residues 392–411 (NSDSGKSTPSNNGKKGSSTD) the composition is skewed to polar residues. The span at 412–424 (ISEDWEKDFDLDM) shows a compositional bias: acidic residues.

The sequence is that of BSD domain-containing protein 1 (BSDC1) from Gallus gallus (Chicken).